The following is a 456-amino-acid chain: Adenylosuccinate lyase (456 aa).

N(6)-(1,2-dicarboxyethyl)-AMP contacts are provided by residues 15-16, 90-92, and 122-123; these read RY, NHD, and TS. H171 serves as the catalytic Proton donor/acceptor. Q247 serves as a coordination point for N(6)-(1,2-dicarboxyethyl)-AMP. The active-site Proton donor/acceptor is the S295. Residues S296, 301–303, N309, R335, and 340–344 contribute to the N(6)-(1,2-dicarboxyethyl)-AMP site; these read KVN and STVLR.

It belongs to the lyase 1 family. Adenylosuccinate lyase subfamily. In terms of assembly, homotetramer. Residues from neighboring subunits contribute catalytic and substrate-binding residues to each active site.

It catalyses the reaction N(6)-(1,2-dicarboxyethyl)-AMP = fumarate + AMP. It carries out the reaction (2S)-2-[5-amino-1-(5-phospho-beta-D-ribosyl)imidazole-4-carboxamido]succinate = 5-amino-1-(5-phospho-beta-D-ribosyl)imidazole-4-carboxamide + fumarate. The protein operates within purine metabolism; AMP biosynthesis via de novo pathway; AMP from IMP: step 2/2. Its pathway is purine metabolism; IMP biosynthesis via de novo pathway; 5-amino-1-(5-phospho-D-ribosyl)imidazole-4-carboxamide from 5-amino-1-(5-phospho-D-ribosyl)imidazole-4-carboxylate: step 2/2. Its function is as follows. Catalyzes two reactions in de novo purine nucleotide biosynthesis. Catalyzes the breakdown of 5-aminoimidazole- (N-succinylocarboxamide) ribotide (SAICAR or 2-[5-amino-1-(5-phospho-beta-D-ribosyl)imidazole-4-carboxamido]succinate) to 5-aminoimidazole-4-carboxamide ribotide (AICAR or 5-amino-1-(5-phospho-beta-D-ribosyl)imidazole-4-carboxamide) and fumarate, and of adenylosuccinate (ADS or N(6)-(1,2-dicarboxyethyl)-AMP) to adenosine monophosphate (AMP) and fumarate. This chain is Adenylosuccinate lyase (purB), found in Legionella pneumophila subsp. pneumophila (strain Philadelphia 1 / ATCC 33152 / DSM 7513).